A 397-amino-acid polypeptide reads, in one-letter code: Enoyl-[acyl-carrier-protein] reductase [NADH] (397 aa).

NAD(+)-binding positions include 48-53 (GASTGY), 74-75 (FE), 111-112 (DA), and 139-140 (VA). Tyr-225 provides a ligand contact to substrate. The Proton donor role is filled by Tyr-235. NAD(+) contacts are provided by residues Lys-244 and 273–275 (VVT).

It belongs to the TER reductase family. In terms of assembly, monomer.

The enzyme catalyses a 2,3-saturated acyl-[ACP] + NAD(+) = a (2E)-enoyl-[ACP] + NADH + H(+). Its pathway is lipid metabolism; fatty acid biosynthesis. Its function is as follows. Involved in the final reduction of the elongation cycle of fatty acid synthesis (FAS II). Catalyzes the reduction of a carbon-carbon double bond in an enoyl moiety that is covalently linked to an acyl carrier protein (ACP). The polypeptide is Enoyl-[acyl-carrier-protein] reductase [NADH] (Burkholderia pseudomallei (strain 1106a)).